The following is a 337-amino-acid chain: Cysteine synthase 3 (337 aa).

Lys-47 carries the post-translational modification N6-(pyridoxal phosphate)lysine. Pyridoxal 5'-phosphate contacts are provided by residues Asn-78, 182–186 (GSSGT), and Ser-270.

Belongs to the cysteine synthase/cystathionine beta-synthase family. Homodimer. Pyridoxal 5'-phosphate is required as a cofactor.

The catalysed reaction is O-acetyl-L-serine + hydrogen sulfide = L-cysteine + acetate. It functions in the pathway amino-acid biosynthesis; L-cysteine biosynthesis; L-cysteine from L-serine: step 2/2. Its function is as follows. Primarily catalyzes the formation of cysteine and acetate from O-acetylserine and hydrogen sulfide. Can also catalyze the formation of cysteine and acetate from S-sulfocysteine and hydrogen sulfide and the formation of cyanoalanine and hydrogen sulfide from either S-sulfocysteine or O-acetylserine and hydrogen cyanide. The polypeptide is Cysteine synthase 3 (Caenorhabditis elegans).